Reading from the N-terminus, the 417-residue chain is Gamma-glutamyl phosphate reductase (417 aa).

Belongs to the gamma-glutamyl phosphate reductase family.

Its subcellular location is the cytoplasm. It catalyses the reaction L-glutamate 5-semialdehyde + phosphate + NADP(+) = L-glutamyl 5-phosphate + NADPH + H(+). The protein operates within amino-acid biosynthesis; L-proline biosynthesis; L-glutamate 5-semialdehyde from L-glutamate: step 2/2. Catalyzes the NADPH-dependent reduction of L-glutamate 5-phosphate into L-glutamate 5-semialdehyde and phosphate. The product spontaneously undergoes cyclization to form 1-pyrroline-5-carboxylate. The chain is Gamma-glutamyl phosphate reductase from Escherichia coli O7:K1 (strain IAI39 / ExPEC).